Consider the following 317-residue polypeptide: Cyclin-dependent kinase 1 (317 aa).

A Protein kinase domain is found at 7 to 292 (YQRQEKVGEG…AKRALIHPYF (286 aa)). ATP is bound by residues 13-21 (VGEGTYGVV) and K37. At T17 the chain carries Phosphothreonine. Y18 carries the phosphotyrosine; by SWE1 modification. D133 acts as the Proton acceptor in catalysis. T166 carries the post-translational modification Phosphothreonine; by CAK. Residues 296 to 317 (DDRDHNNYNEDNIGIDKHQNMQ) are disordered.

The protein belongs to the protein kinase superfamily. CMGC Ser/Thr protein kinase family. CDC2/CDKX subfamily. Forms several complexes with cyclins CCN1, CLB2, CLN3, and HGC1. The CDC28-CCN1 complex associates with septin CDC11 upon hyphal induction. Interacts with IQG1, RFA2, and HSP90. In terms of processing, phosphorylated at Tyr-18 by SWE1 in a cell cycle-dependent manner. Yeast-form and hyphal cells display similar dynamics of phosphorylation and dephosphorylation of Tyr-18. Tyr-18 phosphorylation leads to inhibition of CDC28 kinase activity.

It catalyses the reaction L-seryl-[protein] + ATP = O-phospho-L-seryl-[protein] + ADP + H(+). The enzyme catalyses L-threonyl-[protein] + ATP = O-phospho-L-threonyl-[protein] + ADP + H(+). With respect to regulation, phosphorylation at Thr-17 or Tyr-18 inactivates the enzyme, while phosphorylation at Thr-166 activates it. Its function is as follows. Cyclin-dependent kinase that acts as a master regulator of the mitotic and meiotic cell cycles. May drive the G1-S transition. Plays a role in mitotic exit. Plays a role in the expression of morphology-related transcription factors, and especially hyphae-specific genes. Binds distinct cyclin subunits as cells progress through the division cycle or flamentous growth. The CDC28-CLB2 complex regulates cytokinesis partly by phosphorylating the actomyosin ring component IQG1. The CDC28-CLN3 complex phosphorylates SLA1 which regulates cortical actin patch dynamics. The CDC28-CCN1 complex phosphorylates CDC11 and SEC2 upon induction of filamentous growth. The CDC28-HGC1 complex also phosphorylates SEC2 and maintains CDC11 phosphorylation throughout hyphal growth. Moreover, the CDC28-HGC1 complex phosphorylates and prevents RGA2 from localizing to hyphal tips, leading to localized CDC42 activation for hyphal extension. CDC28-HGC1 phosphorylation of EFG1 represses cell separation genes during hyphal growth. Additional substrates for CDC28 are RFA2 in G1-phase; MOB2, which is required for the maintenance of polarisome components and for inhibition of cell separation in hyphae; and GIN4 to regulate its association to SEP7 and subsequent septin ring assembly. This is Cyclin-dependent kinase 1 from Candida albicans (strain SC5314 / ATCC MYA-2876) (Yeast).